The chain runs to 116 residues: G antigen 10 (116 aa).

Positions 1–116 are disordered; sequence MSWRGRSTYR…PEEGEKQSQC (116 aa). Positions 31-44 are enriched in acidic residues; that stretch reads FSDEVEPATPEEGE. 2 stretches are compositionally biased toward basic and acidic residues: residues 71–80 and 102–116; these read PEADSQEQVH and EEVK…QSQC.

Belongs to the GAGE family.

The protein is G antigen 10 (GAGE10) of Homo sapiens (Human).